A 149-amino-acid chain; its full sequence is D-aminoacyl-tRNA deacylase (149 aa).

The short motif at 139 to 140 is the Gly-cisPro motif, important for rejection of L-amino acids element; it reads GP.

The protein belongs to the DTD family. Homodimer.

Its subcellular location is the cytoplasm. It catalyses the reaction glycyl-tRNA(Ala) + H2O = tRNA(Ala) + glycine + H(+). The enzyme catalyses a D-aminoacyl-tRNA + H2O = a tRNA + a D-alpha-amino acid + H(+). Its function is as follows. An aminoacyl-tRNA editing enzyme that deacylates mischarged D-aminoacyl-tRNAs. Also deacylates mischarged glycyl-tRNA(Ala), protecting cells against glycine mischarging by AlaRS. Acts via tRNA-based rather than protein-based catalysis; rejects L-amino acids rather than detecting D-amino acids in the active site. By recycling D-aminoacyl-tRNA to D-amino acids and free tRNA molecules, this enzyme counteracts the toxicity associated with the formation of D-aminoacyl-tRNA entities in vivo and helps enforce protein L-homochirality. This is D-aminoacyl-tRNA deacylase (dtd1) from Schizosaccharomyces pombe (strain 972 / ATCC 24843) (Fission yeast).